The following is a 433-amino-acid chain: tRNA (guanine(10)-N(2))-methyltransferase (433 aa).

The protein belongs to the class I-like SAM-binding methyltransferase superfamily. TRM11 methyltransferase family. Interacts with TRM112.

It localises to the cytoplasm. It catalyses the reaction guanosine(10) in tRNA + S-adenosyl-L-methionine = N(2)-methylguanosine(10) in tRNA + S-adenosyl-L-homocysteine + H(+). Its function is as follows. Catalytic subunit of an S-adenosyl-L-methionine-dependent tRNA methyltransferase complex that mediates the methylation of the guanosine nucleotide at position 10 (m2G10) in tRNAs. The polypeptide is tRNA (guanine(10)-N(2))-methyltransferase (TRM11) (Saccharomyces cerevisiae (strain ATCC 204508 / S288c) (Baker's yeast)).